We begin with the raw amino-acid sequence, 94 residues long: Large ribosomal subunit protein uL29 (94 aa).

The tract at residues A65–G94 is disordered. Residues R73–G94 are compositionally biased toward basic residues.

This sequence belongs to the universal ribosomal protein uL29 family.

This chain is Large ribosomal subunit protein uL29, found in Leptospira interrogans serogroup Icterohaemorrhagiae serovar copenhageni (strain Fiocruz L1-130).